The sequence spans 127 residues: Aspartate 1-decarboxylase (127 aa).

The active-site Schiff-base intermediate with substrate; via pyruvic acid is the S25. A Pyruvic acid (Ser) modification is found at S25. T57 is a binding site for substrate. Y58 serves as the catalytic Proton donor. 73–75 provides a ligand contact to substrate; it reads GAA.

Belongs to the PanD family. In terms of assembly, heterooctamer of four alpha and four beta subunits. The cofactor is pyruvate. In terms of processing, is synthesized initially as an inactive proenzyme, which is activated by self-cleavage at a specific serine bond to produce a beta-subunit with a hydroxyl group at its C-terminus and an alpha-subunit with a pyruvoyl group at its N-terminus.

Its subcellular location is the cytoplasm. It catalyses the reaction L-aspartate + H(+) = beta-alanine + CO2. It functions in the pathway cofactor biosynthesis; (R)-pantothenate biosynthesis; beta-alanine from L-aspartate: step 1/1. Its function is as follows. Catalyzes the pyruvoyl-dependent decarboxylation of aspartate to produce beta-alanine. The protein is Aspartate 1-decarboxylase of Bacillus cereus (strain G9842).